A 155-amino-acid polypeptide reads, in one-letter code: MDYEIRQEQKRKIAGFHMVGPWEHTVKQGFEQLMTWVDRQRIVPVEWIAVYYDNPDVVPAEKLRCDTVVSVAENFILPDNSEGVIVTAIEGGEYATAVARVEDRDFAKPWERFFDVLEQDSAYQIASAPCFETYLNNGMEDGYWDIEMYIPVQRK.

It belongs to the DNA gyrase inhibitor family. As to quaternary structure, interacts with DNA gyrase.

It is found in the cytoplasm. Functionally, inhibits the supercoiling activity of DNA gyrase. Acts by inhibiting DNA gyrase at an early step, prior to (or at the step of) binding of DNA by the gyrase. It protects cells against toxins that target DNA gyrase, by inhibiting activity of these toxins and reducing the formation of lethal double-strand breaks in the cell. The sequence is that of DNA gyrase inhibitor from Salmonella typhi.